The sequence spans 399 residues: MLRWTTAGESHGRALVAMLEGMVAGVPITSEEIGAQLKRRRLGYGRGARMKFEQDQVTMLAGVRHGLTLGGPIAIEIGNTEWPKWESVMSPDPVDPADLDVARNAPLTRPRPGHADYAGMLKYGFDDARPVLERASARETAARVAAGTVARAFLREALGVEVLSHVISIGASKPYDGPAPQFSDLSAIDDSPVRAFDKASEELMIAEIEAAKRDGDTLGGVVEVVADGLPVGLGSFTSGENRLDSQLAAAVMGIQAIKGVEIGDGFETARRRGSVAHDEMYPGPDGVVRSTNRAGGLEGGMTNGQPLRVRAAMKPISTVPRALATVDMTSGEEAVAIHQRSDVCAVPAAGVVVETMVALVLARAALEKFGGDSLAETRANIDSYLRAVAEREPAAQASS.

Residues Arg40 and Arg46 each coordinate NADP(+). Residues 134–136 (RAS), 255–256 (QA), Gly299, 314–318 (KPIST), and Arg340 contribute to the FMN site.

Belongs to the chorismate synthase family. Homotetramer. FMNH2 is required as a cofactor.

It catalyses the reaction 5-O-(1-carboxyvinyl)-3-phosphoshikimate = chorismate + phosphate. It participates in metabolic intermediate biosynthesis; chorismate biosynthesis; chorismate from D-erythrose 4-phosphate and phosphoenolpyruvate: step 7/7. Catalyzes the anti-1,4-elimination of the C-3 phosphate and the C-6 proR hydrogen from 5-enolpyruvylshikimate-3-phosphate (EPSP) to yield chorismate, which is the branch point compound that serves as the starting substrate for the three terminal pathways of aromatic amino acid biosynthesis. This reaction introduces a second double bond into the aromatic ring system. The protein is Chorismate synthase of Mycolicibacterium smegmatis (strain ATCC 700084 / mc(2)155) (Mycobacterium smegmatis).